The sequence spans 248 residues: Pyridoxine 5'-phosphate synthase (248 aa).

A 3-amino-2-oxopropyl phosphate-binding site is contributed by Asn10. 12 to 13 (DH) lines the 1-deoxy-D-xylulose 5-phosphate pocket. Position 21 (Arg21) interacts with 3-amino-2-oxopropyl phosphate. The active-site Proton acceptor is the His46. 1-deoxy-D-xylulose 5-phosphate contacts are provided by Arg48 and His53. Glu73 (proton acceptor) is an active-site residue. Thr103 provides a ligand contact to 1-deoxy-D-xylulose 5-phosphate. The active-site Proton donor is His194. 3-amino-2-oxopropyl phosphate contacts are provided by residues Gly195 and 216 to 217 (GH).

This sequence belongs to the PNP synthase family. In terms of assembly, homooctamer; tetramer of dimers.

The protein localises to the cytoplasm. The catalysed reaction is 3-amino-2-oxopropyl phosphate + 1-deoxy-D-xylulose 5-phosphate = pyridoxine 5'-phosphate + phosphate + 2 H2O + H(+). Its pathway is cofactor biosynthesis; pyridoxine 5'-phosphate biosynthesis; pyridoxine 5'-phosphate from D-erythrose 4-phosphate: step 5/5. In terms of biological role, catalyzes the complicated ring closure reaction between the two acyclic compounds 1-deoxy-D-xylulose-5-phosphate (DXP) and 3-amino-2-oxopropyl phosphate (1-amino-acetone-3-phosphate or AAP) to form pyridoxine 5'-phosphate (PNP) and inorganic phosphate. In Legionella pneumophila (strain Paris), this protein is Pyridoxine 5'-phosphate synthase.